We begin with the raw amino-acid sequence, 339 residues long: Protein-glutamate methylesterase/protein-glutamine glutaminase 3 (339 aa).

In terms of domain architecture, Response regulatory spans asparagine 2–alanine 119. Position 53 is a 4-aspartylphosphate (aspartate 53). The 196-residue stretch at proline 141–threonine 336 folds into the CheB-type methylesterase domain. Active-site residues include serine 158, histidine 185, and aspartate 278.

This sequence belongs to the CheB family. Phosphorylated by CheA. Phosphorylation of the N-terminal regulatory domain activates the methylesterase activity.

The protein resides in the cytoplasm. It catalyses the reaction [protein]-L-glutamate 5-O-methyl ester + H2O = L-glutamyl-[protein] + methanol + H(+). The enzyme catalyses L-glutaminyl-[protein] + H2O = L-glutamyl-[protein] + NH4(+). Its function is as follows. Involved in chemotaxis. Part of a chemotaxis signal transduction system that modulates chemotaxis in response to various stimuli. Catalyzes the demethylation of specific methylglutamate residues introduced into the chemoreceptors (methyl-accepting chemotaxis proteins or MCP) by CheR. Also mediates the irreversible deamidation of specific glutamine residues to glutamic acid. This Burkholderia orbicola (strain AU 1054) protein is Protein-glutamate methylesterase/protein-glutamine glutaminase 3.